The primary structure comprises 733 residues: Protein ROG3 (733 aa).

The PY-motif motif lies at 460–463 (PPNY). Residues 518 to 566 (RDNLGLPPSASSAAASRSLSPLLNVPAPEDGTERILPQSALGPNSGSVP) form a disordered region. Low complexity predominate over residues 523–540 (LPPSASSAAASRSLSPLL). A PY-motif motif is present at residues 625–628 (PPSY). 2 disordered regions span residues 636–658 (QPRK…SIPT) and 693–733 (ELTS…GNKR). Residues 646–658 (RNSSTTLSSSIPT) are compositionally biased toward low complexity.

It belongs to the arrestin family. As to quaternary structure, interacts with RSP5 via its 2 PY-motifs.

Involved in resistance to GST substrate o-dinitrobenzene (o-DNB). This chain is Protein ROG3 (ROG3), found in Saccharomyces cerevisiae (strain ATCC 204508 / S288c) (Baker's yeast).